A 350-amino-acid chain; its full sequence is Glycogenin-1 (350 aa).

Thr2 is modified (N-acetylthreonine). The UDP site is built by Leu9, Thr11, Asn12, and Tyr15. Residues Leu9, Thr11, Asn12, and Tyr15 each contribute to the UDP-alpha-D-glucose site. Ser44 bears the Phosphoserine mark. Arg77 provides a ligand contact to UDP. 10 residues coordinate UDP-alpha-D-glucose: Arg77, Lys86, Asp102, Ala103, Asp104, Asn133, Ser134, Asp160, Asp163, and Gln164. Positions 102, 103, and 104 each coordinate UDP. Position 102 (Asp102) interacts with Mn(2+). Mn(2+) is bound at residue Asp104. A glycan (O-linked (Glc...) tyrosine) is linked at Tyr195. Residues His212, Gly215, and Lys218 each coordinate UDP. His212 contributes to the Mn(2+) binding site. 2 residues coordinate UDP-alpha-D-glucose: Gly215 and Lys218. Positions 301–333 (SHLSLGEIPAMAQPFVSSEERKERWEQGQADYM) are interaction with GYS1.

Belongs to the glycosyltransferase 8 family. Glycogenin subfamily. As to quaternary structure, part of the GYS1-GYG1 complex, a heterooctamer composed of a tetramer of GYS1 and 2 dimers of GYG1, where each GYS1 protomer binds to one GYG1 subunit (via GYG1 C-terminus); the GYS1 tetramer may dissociate from GYG1 dimers to continue glycogen polymerization on its own. May also form a heterooctamer complex with GYS2 (via GYG1 C-terminus). The cofactor is Mn(2+). Post-translationally, self-glycosylated by the transfer of glucose residues from UDP-glucose to itself, forming an alpha-1,4-glycan of around 10 residues attached to Tyr-195. In terms of processing, phosphorylated. In terms of tissue distribution, highly expressed in skeletal muscle and heart, with lower levels in brain, lung, kidney and pancreas.

The protein localises to the cytoplasm. It is found in the nucleus. The enzyme catalyses L-tyrosyl-[glycogenin] + UDP-alpha-D-glucose = alpha-D-glucosyl-L-tyrosyl-[glycogenin] + UDP + H(+). It carries out the reaction [1,4-alpha-D-glucosyl](n)-L-tyrosyl-[glycogenin] + UDP-alpha-D-glucose = [1,4-alpha-D-glucosyl](n+1)-L-tyrosyl-[glycogenin] + UDP + H(+). It participates in glycan biosynthesis; glycogen biosynthesis. Its activity is regulated as follows. Inhibited by palladium ions. Its function is as follows. Glycogenin participates in the glycogen biosynthetic process along with glycogen synthase and glycogen branching enzyme. It catalyzes the formation of a short alpha (1,4)-glucosyl chain covalently attached via a glucose 1-O-tyrosyl linkage to internal tyrosine residues and these chains act as primers for the elongation reaction catalyzed by glycogen synthase. The protein is Glycogenin-1 of Homo sapiens (Human).